The primary structure comprises 408 residues: Lipoate--protein ligase 1 (408 aa).

Residues 1–18 constitute a mitochondrion transit peptide; sequence MKRIFRLVRRCHYSTEKR. The region spanning 60 to 242 is the BPL/LPL catalytic domain; the sequence is KFNEPILFLW…EFTKFYEQNY (183 aa). ATP contacts are provided by Arg-102, Gly-107, and Tyr-110. Gly-107 is a (R)-lipoate binding site. Mg(2+) is bound at residue Asp-153. Lys-160 lines the ATP pocket. A (R)-lipoate-binding site is contributed by Lys-160.

Belongs to the LplA family.

The protein resides in the mitochondrion. It carries out the reaction L-lysyl-[lipoyl-carrier protein] + (R)-lipoate + ATP = N(6)-[(R)-lipoyl]-L-lysyl-[lipoyl-carrier protein] + AMP + diphosphate + H(+). The enzyme catalyses (R)-dihydrolipoate + L-lysyl-[lipoyl-carrier protein] + ATP = N(6)-[(R)-dihydrolipoyl]-L-lysyl-[lipoyl-carrier protein] + AMP + diphosphate + H(+). It catalyses the reaction (R)-dihydrolipoate + ATP + H(+) = N(6)-[(R)-dihydrolipoyl]-5'-AMP + diphosphate. The catalysed reaction is N(6)-[(R)-dihydrolipoyl]-5'-AMP + L-lysyl-[lipoyl-carrier protein] = N(6)-[(R)-dihydrolipoyl]-L-lysyl-[lipoyl-carrier protein] + AMP + 2 H(+). It participates in protein modification; protein lipoylation via exogenous pathway; protein N(6)-(lipoyl)lysine from lipoate: step 1/2. The protein operates within protein modification; protein lipoylation via exogenous pathway; protein N(6)-(lipoyl)lysine from lipoate: step 2/2. Its activity is regulated as follows. Inhibited by the lipoate analog 8-bromo-octanoate (BrO). Catalytic activity is increased in the presence of Mg(2+). Functionally, catalyzes both the ATP-dependent activation of exogenously supplied lipoate to lipoyl-AMP and the transfer of the activated lipoyl onto the lipoyl domains of lipoate-dependent enzymes. In the mitochondrion, functions as a redox switch between two lipoylation routes. Senses the oxidation state of lipoate and determines which downstream enzymes will be lipoylated. In low reducing conditions, uses lipoate in its oxidized ring form to lipoylate glycine cleavage system H-protein GCVH. In high reducing conditions and together with LipL2, uses reduced lipoate (dihydrolipoate) to lipoylate the E2 component of the branched chain alpha-ketoacid dehydrogenase complex BCKDH-E2/BCDH and the E2 component of the alpha-ketoglutarate dehydrogenase complex KDH. LipL1 is responsible for catalysing the activation of lipoate, forming lipoyl-AMP while LipL2 is required but is not capable of catalyzing this reaction. This Plasmodium falciparum (isolate 3D7) protein is Lipoate--protein ligase 1.